Consider the following 286-residue polypeptide: Putative cyclin-H (286 aa).

The Cyclin N-terminal domain occupies 79 to 148; the sequence is AIIYIKRFYL…ILESLNFNLI (70 aa). A disordered region spans residues 235–286; the sequence is NNNNNNNNNNNNNNNNNNNNNNNNNNNNNNNNNNNNNNNNNNNNNNNNNLLL.

This sequence belongs to the cyclin family. Cyclin C subfamily.

The protein localises to the nucleus. In terms of biological role, may regulate cdk7 involved in transcription regulation and cell cycle progression. In Dictyostelium discoideum (Social amoeba), this protein is Putative cyclin-H (cycH).